Reading from the N-terminus, the 876-residue chain is Leucine--tRNA ligase (876 aa).

The short motif at 43 to 53 is the 'HIGH' region element; that stretch reads PYPSGRIHMGH. The 'KMSKS' region signature appears at 630–634; the sequence is KMSKS. ATP is bound at residue lysine 633.

It belongs to the class-I aminoacyl-tRNA synthetase family.

It localises to the cytoplasm. The enzyme catalyses tRNA(Leu) + L-leucine + ATP = L-leucyl-tRNA(Leu) + AMP + diphosphate. The chain is Leucine--tRNA ligase from Methylocella silvestris (strain DSM 15510 / CIP 108128 / LMG 27833 / NCIMB 13906 / BL2).